The sequence spans 784 residues: Lon protease (784 aa).

The 194-residue stretch at 11 to 204 folds into the Lon N-terminal domain; the sequence is IPVLPLRDVV…YLMAMMESEI (194 aa). 356–363 is an ATP binding site; it reads GPPGVGKT. Residues 592–773 form the Lon proteolytic domain; that stretch reads ENRVGQVTGL…EEVLTLALQN (182 aa). Catalysis depends on residues Ser-679 and Lys-722.

It belongs to the peptidase S16 family. In terms of assembly, homohexamer. Organized in a ring with a central cavity. ATP binding and hydrolysis do not affect the oligomeric state of the enzyme.

It is found in the cytoplasm. The catalysed reaction is Hydrolysis of proteins in presence of ATP.. With respect to regulation, contains an allosteric site (distinct from its active site), whose occupancy by an unfolded polypeptide leads to enzyme activation. ATP-dependent serine protease that mediates the selective degradation of mutant and abnormal proteins as well as certain short-lived regulatory proteins. Required for cellular homeostasis and for survival from DNA damage and developmental changes induced by stress. Degrades polypeptides processively to yield small peptide fragments that are 5 to 10 amino acids long. Binds to DNA in a double-stranded, site-specific manner. Endogenous substrates include the regulatory proteins RcsA and SulA, the transcriptional activator SoxS, and UmuD. Its overproduction specifically inhibits translation through at least two different pathways, one of them being the YoeB-YefM toxin-antitoxin system. The protein is Lon protease of Escherichia coli O6:H1 (strain CFT073 / ATCC 700928 / UPEC).